An 83-amino-acid chain; its full sequence is ATP synthase subunit c (83 aa).

Helical transmembrane passes span 10–30 (IAVA…FGLL) and 52–72 (MFIV…IALF).

The protein belongs to the ATPase C chain family. As to quaternary structure, F-type ATPases have 2 components, F(1) - the catalytic core - and F(0) - the membrane proton channel. F(1) has five subunits: alpha(3), beta(3), gamma(1), delta(1), epsilon(1). F(0) has three main subunits: a(1), b(2) and c(10-14). The alpha and beta chains form an alternating ring which encloses part of the gamma chain. F(1) is attached to F(0) by a central stalk formed by the gamma and epsilon chains, while a peripheral stalk is formed by the delta and b chains.

It localises to the cell inner membrane. Its function is as follows. F(1)F(0) ATP synthase produces ATP from ADP in the presence of a proton or sodium gradient. F-type ATPases consist of two structural domains, F(1) containing the extramembraneous catalytic core and F(0) containing the membrane proton channel, linked together by a central stalk and a peripheral stalk. During catalysis, ATP synthesis in the catalytic domain of F(1) is coupled via a rotary mechanism of the central stalk subunits to proton translocation. In terms of biological role, key component of the F(0) channel; it plays a direct role in translocation across the membrane. A homomeric c-ring of between 10-14 subunits forms the central stalk rotor element with the F(1) delta and epsilon subunits. The sequence is that of ATP synthase subunit c from Shewanella baltica (strain OS223).